Reading from the N-terminus, the 182-residue chain is ATP synthase subunit b (182 aa).

A helical membrane pass occupies residues 25-45 (VVLAGFAVLFYIVVKFVVPMF).

The protein belongs to the ATPase B chain family. F-type ATPases have 2 components, F(1) - the catalytic core - and F(0) - the membrane proton channel. F(1) has five subunits: alpha(3), beta(3), gamma(1), delta(1), epsilon(1). F(0) has three main subunits: a(1), b(2) and c(10-14). The alpha and beta chains form an alternating ring which encloses part of the gamma chain. F(1) is attached to F(0) by a central stalk formed by the gamma and epsilon chains, while a peripheral stalk is formed by the delta and b chains.

The protein resides in the cell membrane. In terms of biological role, f(1)F(0) ATP synthase produces ATP from ADP in the presence of a proton or sodium gradient. F-type ATPases consist of two structural domains, F(1) containing the extramembraneous catalytic core and F(0) containing the membrane proton channel, linked together by a central stalk and a peripheral stalk. During catalysis, ATP synthesis in the catalytic domain of F(1) is coupled via a rotary mechanism of the central stalk subunits to proton translocation. Component of the F(0) channel, it forms part of the peripheral stalk, linking F(1) to F(0). This chain is ATP synthase subunit b, found in Arthrobacter sp. (strain FB24).